Consider the following 413-residue polypeptide: Probable glucan 1,3-beta-glucosidase ARB_04467 (413 aa).

Residues 1–17 form the signal peptide; the sequence is MKFGSLLGLSLVGLSVA. Substrate contacts are provided by E46, E202, and Y262. E202 functions as the Proton donor in the catalytic mechanism. An intrachain disulfide couples C282 to C412. E300 serves as the catalytic Nucleophile.

Belongs to the glycosyl hydrolase 5 (cellulase A) family. Monomer.

The protein localises to the secreted. The protein resides in the cell wall. The enzyme catalyses Successive hydrolysis of beta-D-glucose units from the non-reducing ends of (1-&gt;3)-beta-D-glucans, releasing alpha-glucose.. Major glucan 1,3-beta-glucosidase required for cell wall integrity. Beta-glucanases participate in the metabolism of beta-glucan, the main structural component of the cell wall. Can also function biosynthetically as a transglycosylase. Functions to deliver glucan from the cell to the extracellular matrix. Involved in cell-substrate and cell-cell adhesion. In Arthroderma benhamiae (strain ATCC MYA-4681 / CBS 112371) (Trichophyton mentagrophytes), this protein is Probable glucan 1,3-beta-glucosidase ARB_04467.